The primary structure comprises 493 residues: Probable malate:quinone oxidoreductase (493 aa).

Belongs to the MQO family. It depends on FAD as a cofactor.

It carries out the reaction (S)-malate + a quinone = a quinol + oxaloacetate. Its pathway is carbohydrate metabolism; tricarboxylic acid cycle; oxaloacetate from (S)-malate (quinone route): step 1/1. The polypeptide is Probable malate:quinone oxidoreductase (Mycobacterium tuberculosis (strain ATCC 25177 / H37Ra)).